A 2718-amino-acid polypeptide reads, in one-letter code: E3 SUMO-protein ligase RanBP2 (2718 aa).

The interval 1-100 is sufficient for interaction with Hsp83; that stretch reads MFTTRKEVDA…DPRQSEVVID (100 aa). Residues 1–200 are sufficient for interaction with piwi; that stretch reads MFTTRKEVDA…EKMKIDQAFN (200 aa). 2 TPR repeats span residues 26-58 and 59-94; these read DIKGLAVARLYMKVQEYPKAIEYLNGYLRVRDD and AVGHNMIATCYSRLNPPDVTEALQHYQRSIQIDPRQ. Disordered stretches follow at residues 796 to 816 and 937 to 959; these read QQDRNSRGIDNSFGSPDVHNN and EHQQQQQHQQQQSHNQGAIHPVV. A compositionally biased stretch (polar residues) spans 803–816; that stretch reads GIDNSFGSPDVHNN. The stretch at 808 to 809 is repeat 1; sequence FG. The 27 X 2 AA repeats of F-G stretch occupies residues 808–2581; sequence FGSPDVHNNS…GEENETKLFG (1774 aa). Residues 938 to 948 show a composition bias toward low complexity; that stretch reads HQQQQQHQQQQ. Repeat copies occupy residues 1028–1029, 1035–1036, and 1104–1105. Residues 1181–1208 are disordered; the sequence is QPVEKEPPANVVITSSDPLPKPTTASVQ. Residues 1192–1208 are compositionally biased toward polar residues; that stretch reads VITSSDPLPKPTTASVQ. Residues 1252-1253 form repeat 5; the sequence is FG. Disordered regions lie at residues 1263 to 1314 and 1483 to 1502; these read FKTQ…KPII and NKPQEQTKTQPNPDPPATAA. Residues 1284 to 1299 show a composition bias toward polar residues; it reads NQSGATDPNKTLPQDT. A RanBD1 1 domain is found at 1309 to 1445; the sequence is DFKPIIPLPD…FTKASEAAKS (137 aa). Residues 1483–1493 are compositionally biased toward polar residues; sequence NKPQEQTKTQP. A run of 4 repeats spans residues 1506-1507, 1539-1540, 1547-1548, and 1552-1553. Positions 1605-1742 constitute a RanBD1 2 domain; sequence QFVPVIALPD…VQKAQQSIGN (138 aa). A disordered region spans residues 1738-1761; it reads QSIGNEPKKEEVPSAAGEKEKPIK. Positions 1743-1760 are enriched in basic and acidic residues; that stretch reads EPKKEEVPSAAGEKEKPI. Repeat 10 spans residues 1763–1764; sequence FG. The RanBP2-type 1 zinc-finger motif lies at 1770–1799; sequence KAGSWNCQACYTNNGQDQLYCLACQEPKDA. Repeat copies occupy residues 1826–1827, 1842–1843, 1874–1875, and 1883–1884. The RanBP2-type 2 zinc finger occupies 1890 to 1919; sequence AVGSWSCSACYVNNPGESLYCSACDAPKND. A run of 2 repeats spans residues 1942–1943 and 1944–1945. Disordered stretches follow at residues 1981–2021, 2154–2204, and 2239–2273; these read FTFS…TYFS, EDSP…THEV, and SLSRNNSSASEASKTPSSAFIFGSTDKSEPGKDAG. Residues 2002-2016 show a composition bias toward acidic residues; it reads EDEDNDSQEVEEEEN. The region spanning 2019–2151 is the RanBD1 3 domain; that stretch reads YFSPVIPLPD…IKNALNETAK (133 aa). A compositionally biased stretch (polar residues) spans 2161-2175; that stretch reads SVSQSTEANKPSQKN. A compositionally biased stretch (low complexity) spans 2239-2257; sequence SLSRNNSSASEASKTPSSA. Tandem repeats lie at residues 2260-2261, 2313-2314, 2332-2333, 2352-2353, 2360-2361, 2366-2367, 2393-2394, 2399-2400, 2415-2416, 2421-2422, and 2580-2581. The disordered stretch occupies residues 2320-2346; sequence AEQQKKDSSESVFGGNKADSQSPATQE. A RanBD1 4 domain is found at 2556 to 2699; sequence HYDAIVELPD…VNSCIKRAKA (144 aa).

The protein belongs to the RanBP2 E3 ligase family. In terms of assembly, part of the nuclear pore complex. Forms a complex with Nxt1, sbr/Nxf1 and RanGAP. Interacts (via TPR repeats) with Hsp83; the interaction is required for the nuclear import of the sesquiterpenoid juvenile hormone receptor Met. Interacts (via N-terminus) with piwi. Expressed in both oocytes and nurse cells (at protein level).

It is found in the nucleus. Its subcellular location is the nuclear pore complex. E3 SUMO-protein ligase. Component of the nuclear pore complex (NPC), a complex required for trafficking across the nuclear envelope. Required for nuclear import of nuclear localization signal (NLS)-containing proteins in an importin alpha/importin beta-dependent manner, but also for the nuclear import of specific proteins such as phosphorylated Mad or the sesquiterpenoid juvenile hormone receptor Met as part of the juvenile hormone signal transduction pathway. Plays a role in nuclear mRNA export by recruiting the mRNA transport complex composed of Nxt1 and sbr/Nxf1 to the NPC. Essential during germline development for transposon silencing and piRNA biogenesis probably by regulating piwi localization to the nucleus. During oogenesis, required to form granules that modulate the biogenesis of annulate lamellae containing nuclear pore complex components. The protein is E3 SUMO-protein ligase RanBP2 of Drosophila melanogaster (Fruit fly).